We begin with the raw amino-acid sequence, 147 residues long: Succinate dehydrogenase assembly factor 2, mitochondrial (147 aa).

This sequence belongs to the SDHAF2 family. In terms of assembly, interacts with the flavoprotein subunit within the SDH catalytic dimer.

It is found in the mitochondrion matrix. In terms of biological role, plays an essential role in the assembly of succinate dehydrogenase (SDH), an enzyme complex (also referred to as respiratory complex II) that is a component of both the tricarboxylic acid (TCA) cycle and the mitochondrial electron transport chain, and which couples the oxidation of succinate to fumarate with the reduction of ubiquinone (coenzyme Q) to ubiquinol. Required for flavinylation (covalent attachment of FAD) of the flavoprotein subunit of the SDH catalytic dimer. This Drosophila grimshawi (Hawaiian fruit fly) protein is Succinate dehydrogenase assembly factor 2, mitochondrial.